The following is a 306-amino-acid chain: UDP-3-O-acyl-N-acetylglucosamine deacetylase (306 aa).

Residues His79, His238, and Asp242 each contribute to the Zn(2+) site. The active-site Proton donor is the His265.

It belongs to the LpxC family. Zn(2+) serves as cofactor.

It carries out the reaction a UDP-3-O-[(3R)-3-hydroxyacyl]-N-acetyl-alpha-D-glucosamine + H2O = a UDP-3-O-[(3R)-3-hydroxyacyl]-alpha-D-glucosamine + acetate. It functions in the pathway glycolipid biosynthesis; lipid IV(A) biosynthesis; lipid IV(A) from (3R)-3-hydroxytetradecanoyl-[acyl-carrier-protein] and UDP-N-acetyl-alpha-D-glucosamine: step 2/6. In terms of biological role, catalyzes the hydrolysis of UDP-3-O-myristoyl-N-acetylglucosamine to form UDP-3-O-myristoylglucosamine and acetate, the committed step in lipid A biosynthesis. This chain is UDP-3-O-acyl-N-acetylglucosamine deacetylase, found in Shewanella violacea (strain JCM 10179 / CIP 106290 / LMG 19151 / DSS12).